The following is a 204-amino-acid chain: Demethylsterigmatocystin 6-O-methyltransferase stcP (204 aa).

S-adenosyl-L-methionine-binding positions include glycine 48–glycine 49, aspartate 73, aspartate 93–phenylalanine 94, and arginine 109. Residue histidine 113 is the Proton acceptor of the active site.

Belongs to the class I-like SAM-binding methyltransferase superfamily. Cation-independent O-methyltransferase family.

It carries out the reaction 6-demethylsterigmatocystin + S-adenosyl-L-methionine = sterigmatocystin + S-adenosyl-L-homocysteine + H(+). It participates in mycotoxin biosynthesis; sterigmatocystin biosynthesis. Functionally, norsolorinic acid reductase; part of the gene cluster that mediates the biosynthesis of sterigmatocystin (ST), a polyketide-derived furanocoumarin which is part of the most toxic and carcinogenic compounds among the known mycotoxins. The first step in the biosynthesis of sterigmatocystin is the production of hexanoate by the fatty acid synthase (FAS) units stcJ and stcK. The polyketide backbone is assembled by the non-reducing polyketide synthase stcA by condensation of the starter hexanoyl-CoA and 7 malonyl-CoA extender units followed by cyclization and release of norsolorinic acid. Norsolorinic acid is the first stable intermediate in the biosynthesis of sterigmatocystin and is converted into averantin (AVN) by the ketoreductase stcE which reduces the hexanoate ketone to an alcohol. Averantin is then oxidized into 5'-hydroxyaverantin (HAVN) by the cytochrome P450 monooxygenase stcF. 5'-hydroxyaverantin is further converted to 5'-oxyaverantin (OAVN) by the 5'-hydroxyaverantin dehydrogenase stcG. The next step is the conversion of OAVN into averufin (AVF) which is catalyzed by a yet to be identified enzyme. The cytochrome P450 monooxygenase stcB and the flavin-binding monooxygenase stcW are both required for the conversion of averufin to 1-hydroxyversicolorone. The esterase stcI probably catalyzes the formation of versiconal hemiacetal acetate from 1-hydroxyversicolorone. The oxydoreductase stcN then probably catalyzes the biosynthetic step from versiconal to versicolorin B (VERB). The next step is performed by the versicolorin B desaturase stcL to produce versicolorin A (VERA). The ketoreductase stcU and the cytochrome P450 monooxygenase stcS are involved in the conversion of versicolorin A to demethylsterigmatocystin. The Baeyer-Villiger oxidas stcQ and the reductase stcR might be involved in the biosynthetic step from versicolorin A to demethylsterigmatocystin. The final step in the biosynthesis of sterigmatocystin is the methylation of demethylsterigmatocystin catalyzed by the methyltransferase stcP. The sequence is that of Demethylsterigmatocystin 6-O-methyltransferase stcP from Emericella nidulans (strain FGSC A4 / ATCC 38163 / CBS 112.46 / NRRL 194 / M139) (Aspergillus nidulans).